The chain runs to 234 residues: Probable chemoreceptor glutamine deamidase CheD 1 (234 aa).

The protein belongs to the CheD family.

It catalyses the reaction L-glutaminyl-[protein] + H2O = L-glutamyl-[protein] + NH4(+). Functionally, probably deamidates glutamine residues to glutamate on methyl-accepting chemotaxis receptors (MCPs), playing an important role in chemotaxis. This is Probable chemoreceptor glutamine deamidase CheD 1 from Albidiferax ferrireducens (strain ATCC BAA-621 / DSM 15236 / T118) (Rhodoferax ferrireducens).